A 303-amino-acid polypeptide reads, in one-letter code: Methionyl-tRNA formyltransferase (303 aa).

(6S)-5,6,7,8-tetrahydrofolate is bound at residue serine 110–proline 113.

Belongs to the Fmt family.

The enzyme catalyses L-methionyl-tRNA(fMet) + (6R)-10-formyltetrahydrofolate = N-formyl-L-methionyl-tRNA(fMet) + (6S)-5,6,7,8-tetrahydrofolate + H(+). Functionally, attaches a formyl group to the free amino group of methionyl-tRNA(fMet). The formyl group appears to play a dual role in the initiator identity of N-formylmethionyl-tRNA by promoting its recognition by IF2 and preventing the misappropriation of this tRNA by the elongation apparatus. This Campylobacter lari (strain RM2100 / D67 / ATCC BAA-1060) protein is Methionyl-tRNA formyltransferase.